A 345-amino-acid polypeptide reads, in one-letter code: D-fructose 1,6-bisphosphatase class 2/sedoheptulose 1,7-bisphosphatase (345 aa).

Mn(2+) is bound by residues Asp33, Glu57, Asp97, and Glu100. Residues 100–102, Tyr131, 176–178, and 198–200 each bind substrate; these read EGT, RPR, and DGD. Glu225 lines the Mn(2+) pocket.

It belongs to the FBPase class 2 family. As to quaternary structure, homotetramer. It depends on Mn(2+) as a cofactor.

It catalyses the reaction beta-D-fructose 1,6-bisphosphate + H2O = beta-D-fructose 6-phosphate + phosphate. The catalysed reaction is D-sedoheptulose 1,7-bisphosphate + H2O = D-sedoheptulose 7-phosphate + phosphate. It participates in carbohydrate biosynthesis; Calvin cycle. Its activity is regulated as follows. Inhibited by AMP and slightly innibited by hydrogen peroxyde. In terms of biological role, catalyzes the hydrolysis of fructose 1,6-bisphosphate (Fru 1,6-P2) and sedoheptulose 1,7-bisphosphate (Sed 1,7-P2) to fructose 6-phosphate and sedoheptulose 7-phosphate, respectively. This Synechococcus elongatus (strain ATCC 33912 / PCC 7942 / FACHB-805) (Anacystis nidulans R2) protein is D-fructose 1,6-bisphosphatase class 2/sedoheptulose 1,7-bisphosphatase.